The primary structure comprises 177 residues: Translation initiation factor IF-3 (177 aa).

Belongs to the IF-3 family. As to quaternary structure, monomer.

The protein resides in the cytoplasm. Functionally, IF-3 binds to the 30S ribosomal subunit and shifts the equilibrium between 70S ribosomes and their 50S and 30S subunits in favor of the free subunits, thus enhancing the availability of 30S subunits on which protein synthesis initiation begins. The protein is Translation initiation factor IF-3 of Rhizobium meliloti (strain 1021) (Ensifer meliloti).